The primary structure comprises 106 residues: Nucleoid-associated protein Smlt1015 (106 aa).

A disordered region spans residues 81–106; the sequence is IDAESKSKMGSATAGMQLPPGMKLPF.

The protein belongs to the YbaB/EbfC family. Homodimer.

The protein localises to the cytoplasm. It localises to the nucleoid. Functionally, binds to DNA and alters its conformation. May be involved in regulation of gene expression, nucleoid organization and DNA protection. In Stenotrophomonas maltophilia (strain K279a), this protein is Nucleoid-associated protein Smlt1015.